The sequence spans 267 residues: Small ribosomal subunit protein uS3 (267 aa).

Positions 38–106 (IRKLLATGME…QVQLNILEVK (69 aa)) constitute a KH type-2 domain. Residues 215 to 267 (TAASAPAGDRDRPRRERPSRPRRSGSTGTTATSTEAGRAATAVVEAPAENQEG) form a disordered region. The segment covering 222–233 (GDRDRPRRERPS) has biased composition (basic and acidic residues). Over residues 238–256 (SGSTGTTATSTEAGRAATA) the composition is skewed to low complexity.

This sequence belongs to the universal ribosomal protein uS3 family. As to quaternary structure, part of the 30S ribosomal subunit. Forms a tight complex with proteins S10 and S14.

Functionally, binds the lower part of the 30S subunit head. Binds mRNA in the 70S ribosome, positioning it for translation. The polypeptide is Small ribosomal subunit protein uS3 (Nocardia farcinica (strain IFM 10152)).